We begin with the raw amino-acid sequence, 334 residues long: Glycerol-1-phosphate dehydrogenase [NAD(P)+] (334 aa).

NAD(+)-binding positions include 77-81 (GRPID) and 99-102 (TTAS). D104 lines the substrate pocket. NAD(+) is bound at residue S108. Position 147 (D147) interacts with substrate. Zn(2+) contacts are provided by D147 and H225. H229 is a substrate binding site. H246 provides a ligand contact to Zn(2+).

The protein belongs to the glycerol-1-phosphate dehydrogenase family. Requires Zn(2+) as cofactor.

It is found in the cytoplasm. The catalysed reaction is sn-glycerol 1-phosphate + NAD(+) = dihydroxyacetone phosphate + NADH + H(+). The enzyme catalyses sn-glycerol 1-phosphate + NADP(+) = dihydroxyacetone phosphate + NADPH + H(+). It participates in membrane lipid metabolism; glycerophospholipid metabolism. Catalyzes the NAD(P)H-dependent reduction of dihydroxyacetonephosphate (DHAP or glycerone phosphate) to glycerol 1-phosphate (G1P). The G1P thus generated is used as the glycerophosphate backbone of phospholipids in the cellular membranes of Archaea. The protein is Glycerol-1-phosphate dehydrogenase [NAD(P)+] of Methanococcus maripaludis (strain C6 / ATCC BAA-1332).